Here is a 73-residue protein sequence, read N- to C-terminus: UPF0435 protein BH2488 (73 aa).

This sequence belongs to the UPF0435 family.

The protein is UPF0435 protein BH2488 of Halalkalibacterium halodurans (strain ATCC BAA-125 / DSM 18197 / FERM 7344 / JCM 9153 / C-125) (Bacillus halodurans).